The primary structure comprises 146 residues: Putative phosphotransferase enzyme IIA component YadI (146 aa).

The region spanning 1-124 (MLGWVITCHD…RIVELGAPEV (124 aa)) is the PTS EIIA type-4 domain. Histidine 9 serves as the catalytic Tele-phosphohistidine intermediate.

It is found in the cytoplasm. Its function is as follows. The phosphoenolpyruvate-dependent sugar phosphotransferase system (sugar PTS), a major carbohydrate active -transport system, catalyzes the phosphorylation of incoming sugar substrates concomitantly with their translocation across the cell membrane. The polypeptide is Putative phosphotransferase enzyme IIA component YadI (yadI) (Escherichia coli (strain K12)).